The chain runs to 461 residues: Ribonuclease inhibitor (461 aa).

N-acetylserine is present on Ser2. The tract at residues Ser2 to Gln11 is 2 X 5 AA tandem repeats of S-L-D-I-Q. 15 LRR repeats span residues Trp20–Ile48, Ser49–Val76, Leu77–Leu105, Ser106–Leu133, Cys134–Leu162, Ala163–Leu190, Cys191–Leu219, Cys220–Leu247, Cys248–Leu276, Cys277–Leu304, Cys305–Phe333, Ser334–Leu361, Cys362–Leu390, Ala391–Leu418, and Val419–Leu447. The residue at position 82 (Thr82) is a Phosphothreonine. Residue Ser91 is modified to Phosphoserine.

In terms of assembly, forms high-affinity heterodimers with RNASE1, ANG and RNASE2. The N-terminus is blocked. In terms of processing, at least 30 of the 32 cysteine residues are in the reduced form.

Its subcellular location is the cytoplasm. The protein resides in the nucleus. Functionally, ribonuclease inhibitor which inhibits RNASE1, RNASE2 and angiogenin (ANG). May play a role in redox homeostasis. Required to inhibit the cytotoxic tRNA ribonuclease activity of ANG in the cytoplasm in absence of stress. Relocates to the nucleus in response to stress, relieving inhibition of ANG in the cytoplasm, and inhibiting the angiogenic activity of ANG in the nucleus. The sequence is that of Ribonuclease inhibitor from Homo sapiens (Human).